The sequence spans 92 residues: Secreted RxLR effector protein RXLR-C02 (92 aa).

An N-terminal signal peptide occupies residues 1–21 (MQFHLLVMTTIAASFAATGSA). The short motif at 48-51 (RALR) is the RxLR element. The disordered stretch occupies residues 54-75 (ENRGLIGDDSDSSISDSDSEAK).

Belongs to the RxLR effector family.

It localises to the secreted. It is found in the host cytoplasm. Its subcellular location is the host nucleus. Functionally, secreted effector that suppresses pattern-triggered immunity (PTI) in plant host. The polypeptide is Secreted RxLR effector protein RXLR-C02 (Plasmopara halstedii (Downy mildew of sunflower)).